The sequence spans 143 residues: Transcriptional regulator MraZ (143 aa).

2 SpoVT-AbrB domains span residues 5–47 (TYTP…PRAE) and 76–119 (TDEQ…DAQA).

This sequence belongs to the MraZ family. As to quaternary structure, forms oligomers.

It localises to the cytoplasm. The protein localises to the nucleoid. In Mycobacterium avium (strain 104), this protein is Transcriptional regulator MraZ.